The primary structure comprises 519 residues: Cytochrome P450 52A12 (519 aa).

Cys-467 is a heme binding site.

Belongs to the cytochrome P450 family. Heme serves as cofactor.

The protein localises to the membrane. Together with an NADPH cytochrome P450 the enzyme system catalyzes the terminal hydroxylation as the first step in the assimilation of alkanes and fatty acids. The chain is Cytochrome P450 52A12 (CYP52A12) from Debaryomyces hansenii (Yeast).